Here is a 331-residue protein sequence, read N- to C-terminus: Probable inactive O-methyltransferase 11 (331 aa).

S-adenosyl-L-methionine contacts are provided by residues G179, D202, 224–226, D225, F226, and K239; that span reads GDF.

The protein belongs to the class I-like SAM-binding methyltransferase superfamily. Cation-independent O-methyltransferase family. COMT subfamily.

The polypeptide is Probable inactive O-methyltransferase 11 (omt11) (Dictyostelium discoideum (Social amoeba)).